Here is a 402-residue protein sequence, read N- to C-terminus: Sensor protein kinase FleS (402 aa).

Residues 188–393 enclose the Histidine kinase domain; sequence SLAHQIRTPL…CATLILPLIP (206 aa). His-191 carries the phosphohistidine; by autocatalysis modification.

It catalyses the reaction ATP + protein L-histidine = ADP + protein N-phospho-L-histidine.. Functionally, member of the two-component regulatory system FleS/FleR that regulates the expression of multiple genes involved in flagellar synthesis, adhesion, swarming, motility and antibiotic resistance. May function as a membrane-associated protein kinase that phosphorylates FleR in response to environmental signals leading to activation of specific gene promoters. The protein is Sensor protein kinase FleS (fleS) of Pseudomonas aeruginosa (strain ATCC 15692 / DSM 22644 / CIP 104116 / JCM 14847 / LMG 12228 / 1C / PRS 101 / PAO1).